A 124-amino-acid polypeptide reads, in one-letter code: Apolipoprotein C-IV (124 aa).

Residues 1-27 form the signal peptide; that stretch reads MSLLRCRQQTLPSLCLSVLFLACFVAS.

This sequence belongs to the apolipoprotein C4 family.

The protein localises to the secreted. Functionally, may participate in lipoprotein metabolism. The polypeptide is Apolipoprotein C-IV (Apoc4) (Rattus norvegicus (Rat)).